The sequence spans 208 residues: uncharacterized protein (208 aa).

Disordered regions lie at residues Phe74 to Pro117 and Glu181 to Lys208. A compositionally biased stretch (polar residues) spans Leu184–Lys208.

This is an uncharacterized protein from Mus musculus (Mouse).